Here is a 196-residue protein sequence, read N- to C-terminus: Probable thymidylate kinase (196 aa).

7-14 provides a ligand contact to ATP; that stretch reads GIDGSGKS.

It belongs to the thymidylate kinase family.

It carries out the reaction dTMP + ATP = dTDP + ADP. The chain is Probable thymidylate kinase from Natronomonas pharaonis (strain ATCC 35678 / DSM 2160 / CIP 103997 / JCM 8858 / NBRC 14720 / NCIMB 2260 / Gabara) (Halobacterium pharaonis).